Reading from the N-terminus, the 164-residue chain is uncharacterized protein (164 aa).

At serine 117 the chain carries Phosphoserine.

This is an uncharacterized protein from Bacillus subtilis (strain 168).